The sequence spans 227 residues: MADNELFDDPEKLKRGLVKVLECVATISSAAAVVNPIFGVAGSLIRVVLHHVDDEDLQKLKREFGSVNRALDEISQQNRQALLQIRKETVDRQYHEVEENIRHQFRKFMEIMEAKPEHLQRKKEDFVESFINDKDDQNMYTLYDGVMGKRKLFSQPILDVYMKHSQGDHRVMENLCTRLAYLFCIGFIALMGYYGILGDDLESRNEEWEENMRNVQEKMQEVLRSCK.

A helical transmembrane segment spans residues 179 to 196 (LAYLFCIGFIALMGYYGI).

It localises to the membrane. This Danio rerio (Zebrafish) protein is Protein rapunzel.